Reading from the N-terminus, the 161-residue chain is Probable chemoreceptor glutamine deamidase CheD (161 aa).

This sequence belongs to the CheD family.

It carries out the reaction L-glutaminyl-[protein] + H2O = L-glutamyl-[protein] + NH4(+). Functionally, probably deamidates glutamine residues to glutamate on methyl-accepting chemotaxis receptors (MCPs), playing an important role in chemotaxis. This is Probable chemoreceptor glutamine deamidase CheD from Lachnoclostridium phytofermentans (strain ATCC 700394 / DSM 18823 / ISDg) (Clostridium phytofermentans).